A 331-amino-acid chain; its full sequence is Holliday junction branch migration complex subunit RuvB (331 aa).

Residues 1 to 182 are large ATPase domain (RuvB-L); it reads MSNDTLHKYE…FGIPLHLEFY (182 aa). Residues Leu-21, Arg-22, Gly-63, Lys-66, Thr-67, Thr-68, 129–131, Arg-172, Tyr-182, and Arg-219 contribute to the ATP site; that span reads EDY. Thr-67 is a Mg(2+) binding site. The small ATPAse domain (RuvB-S) stretch occupies residues 183–254; the sequence is SVDELVLVIK…FANSALFRLG (72 aa). The segment at 257 to 331 is head domain (RuvB-H); sequence GAGFDKMDLK…FEYLLSSKYI (75 aa). DNA-binding residues include Arg-310 and Arg-315.

Belongs to the RuvB family. As to quaternary structure, homohexamer. Forms an RuvA(8)-RuvB(12)-Holliday junction (HJ) complex. HJ DNA is sandwiched between 2 RuvA tetramers; dsDNA enters through RuvA and exits via RuvB. An RuvB hexamer assembles on each DNA strand where it exits the tetramer. Each RuvB hexamer is contacted by two RuvA subunits (via domain III) on 2 adjacent RuvB subunits; this complex drives branch migration. In the full resolvosome a probable DNA-RuvA(4)-RuvB(12)-RuvC(2) complex forms which resolves the HJ.

The protein resides in the cytoplasm. It catalyses the reaction ATP + H2O = ADP + phosphate + H(+). Functionally, the RuvA-RuvB-RuvC complex processes Holliday junction (HJ) DNA during genetic recombination and DNA repair, while the RuvA-RuvB complex plays an important role in the rescue of blocked DNA replication forks via replication fork reversal (RFR). RuvA specifically binds to HJ cruciform DNA, conferring on it an open structure. The RuvB hexamer acts as an ATP-dependent pump, pulling dsDNA into and through the RuvAB complex. RuvB forms 2 homohexamers on either side of HJ DNA bound by 1 or 2 RuvA tetramers; 4 subunits per hexamer contact DNA at a time. Coordinated motions by a converter formed by DNA-disengaged RuvB subunits stimulates ATP hydrolysis and nucleotide exchange. Immobilization of the converter enables RuvB to convert the ATP-contained energy into a lever motion, pulling 2 nucleotides of DNA out of the RuvA tetramer per ATP hydrolyzed, thus driving DNA branch migration. The RuvB motors rotate together with the DNA substrate, which together with the progressing nucleotide cycle form the mechanistic basis for DNA recombination by continuous HJ branch migration. Branch migration allows RuvC to scan DNA until it finds its consensus sequence, where it cleaves and resolves cruciform DNA. This Anaplasma marginale (strain Florida) protein is Holliday junction branch migration complex subunit RuvB.